An 856-amino-acid chain; its full sequence is DNA mismatch repair protein MutS (856 aa).

607–614 (GPNMSGKS) provides a ligand contact to ATP.

It belongs to the DNA mismatch repair MutS family.

Functionally, this protein is involved in the repair of mismatches in DNA. It is possible that it carries out the mismatch recognition step. This protein has a weak ATPase activity. In Lactobacillus delbrueckii subsp. bulgaricus (strain ATCC 11842 / DSM 20081 / BCRC 10696 / JCM 1002 / NBRC 13953 / NCIMB 11778 / NCTC 12712 / WDCM 00102 / Lb 14), this protein is DNA mismatch repair protein MutS.